Here is a 1051-residue protein sequence, read N- to C-terminus: Kinesin-like protein KIN-UC (1051 aa).

Composition is skewed to low complexity over residues 1-12 (MSSSNSSSAVRS), 28-39 (NSNHAVSLSSSS), and 64-90 (SASS…PVRR). Disordered stretches follow at residues 1-39 (MSSS…SSSS) and 51-109 (PGIA…RVSV). The 338-residue stretch at 104–441 (RVRVSVRVRP…IMFGQRAMKI (338 aa)) folds into the Kinesin motor domain. Residue 189-196 (GQTGTGKT) coordinates ATP. The short motif at 411–419 (RTSLIITIG) is the D-BOX element. Coiled coils occupy residues 452–534 (DYES…QKDQ) and 568–761 (DTSQ…KRYM). The span at 753–766 (NVVEEKRYMKEDLS) shows a compositional bias: basic and acidic residues. Residues 753–788 (NVVEEKRYMKEDLSKGSAESGAQTGSQRSQGLKKSL) form a disordered region. Residues 772 to 788 (SGAQTGSQRSQGLKKSL) are compositionally biased toward polar residues. ARM repeat units follow at residues 792–831 (RATM…NLAA), 833–873 (EANQ…NLAM), and 875–915 (EKSQ…NLCG). One copy of the ARM 4; degenerate repeat lies at 917 to 956 (EKFLKLLKEEEGIKGLLTMAQSGNIDIIAQVARGMANFAK).

The protein belongs to the TRAFAC class myosin-kinesin ATPase superfamily. Kinesin family. Ungrouped subfamily. In terms of assembly, interacts (via C-terminus) with NEK5. As to expression, expressed in young root hair-forming cells and in root hair-producing cells at the boundary between the hypocotyl and root. Expressed in cotyledons, young leaves, trichomes and flowers.

It is found in the cytoplasm. It localises to the cytoskeleton. Its subcellular location is the spindle. The protein resides in the phragmoplast. Acts as a plus-end microtubule-dependent motor protein. Involved in the control of root hair tip growth by promoting microtubule depolymerization and limiting the accumulation of endoplasmic microtubules. In vitro, binds to polymerized actin through ARM repeats, and to polymerized tubulin through N-terminal motor domain. This chain is Kinesin-like protein KIN-UC, found in Arabidopsis thaliana (Mouse-ear cress).